Reading from the N-terminus, the 705-residue chain is MARTTPIERYRNFGIMAHIDAGKTTTSERILFYTGVSHKIGEVHDGAAVMDWMEQEQERGITITSAATTAFWSGMDKSMPQHRFNIIDTPGHVDFTIEVERSLRVLDGAVFVLCAVGGVQPQSETVWRQANKYSVPRMAFVNKMDRTGANFDKVVEQLKARLGAYAVPMQVPIGAEDGFEGVVDLLKMKAIHWDTASQGTTFEYRDIPADLVDVATEARSFMVEAAAEASEDLMDKYLNEGDLSEQEILSGLRERTLKVEIVPVFCGSAFKNKGVQAMLDGVVHLLPSPADRPPVQGIDEDEKEDTRAATDTAPFSALAFKIMTDPFVGSLTFFRVYSGTLNSGDQVYNPVKSKKERVGRILQMHSNNREEIKEVRAGDIAAAVGLKDVTTGDTLCAQDKIITLERMVFPEPVISMAVEPKTKSDQEKMGMALGRLAQEDPSFRVKTDEESGQTIISGMGELHLDIIVDRMRREFNVEANVGKPQVAYRETIRKSDVKSDYKHAKQSGGKGQYGHVVIELSPMTEEERKSENVKDDFLFINDITGGIIPKEFIPSVEKGLRETITSGPIAGFPVVGVKVKLVFGSYHDVDSSEMAFKLAASMAFKQGFAKASPVLLEPIMKVEIVSPEDYLGDVMGDVSRRRGVLQGQDDSPSGKIINAMIPLGEMFGYATSLRSMSQGRATFSMEFDHYEEAPANIADAVTKKG.

In terms of domain architecture, tr-type G spans Glu-8–Ala-290. Residues Ala-17–Thr-24, Asp-88–His-92, and Asn-142–Asp-145 each bind GTP. The interval Ala-290–Ala-309 is disordered.

Belongs to the TRAFAC class translation factor GTPase superfamily. Classic translation factor GTPase family. EF-G/EF-2 subfamily.

The protein resides in the cytoplasm. In terms of biological role, catalyzes the GTP-dependent ribosomal translocation step during translation elongation. During this step, the ribosome changes from the pre-translocational (PRE) to the post-translocational (POST) state as the newly formed A-site-bound peptidyl-tRNA and P-site-bound deacylated tRNA move to the P and E sites, respectively. Catalyzes the coordinated movement of the two tRNA molecules, the mRNA and conformational changes in the ribosome. This chain is Elongation factor G, found in Xanthomonas euvesicatoria pv. vesicatoria (strain 85-10) (Xanthomonas campestris pv. vesicatoria).